The following is a 302-amino-acid chain: (2S)-3-sulfopropanediol sulfolyase activating enzyme (302 aa).

In terms of domain architecture, Radical SAM core spans 19–301 (HDGEGIRTLV…RLNIMLKSYE (283 aa)). 11 residues coordinate [4Fe-4S] cluster: C33, C37, C40, C59, C65, C68, C72, C91, C94, C97, and C101. 39–41 (WCS) lines the S-adenosyl-L-methionine pocket. 2 consecutive 4Fe-4S ferredoxin-type domains span residues 50–81 (PERAYNPTRCLTAAVCGRCAKACPTGAVSIVG) and 82–111 (GLVCFDRSKCTGCNACVRACPSGAQTVYGE). Residues G141 and 190–192 (DIK) contribute to the S-adenosyl-L-methionine site.

Belongs to the organic radical-activating enzymes family. Requires [4Fe-4S] cluster as cofactor.

It carries out the reaction glycyl-[protein] + reduced [flavodoxin] + S-adenosyl-L-methionine = glycin-2-yl radical-[protein] + semiquinone [flavodoxin] + 5'-deoxyadenosine + L-methionine + H(+). Its pathway is organosulfur degradation; alkanesulfonate degradation. Its function is as follows. Involved in the degradation of the organosulfur compound 2(S)-dihydroxypropanesulfonate (DHPS). Catalyzes activation of the (2S)-3-sulfopropanediol sulfolyase HpsG under anaerobic conditions by generation of an organic free radical on a glycine residue. In Bilophila wadsworthia (strain 3_1_6), this protein is (2S)-3-sulfopropanediol sulfolyase activating enzyme.